Here is a 301-residue protein sequence, read N- to C-terminus: rRNA methyltransferase 1, mitochondrial (301 aa).

The N-terminal 11 residues, 1 to 11 (MIRSRVNLARE), are a transit peptide targeting the mitochondrion. The interval 121-141 (YNNKNGQDSPHNDLNEGKSSS) is disordered.

Belongs to the class IV-like SAM-binding methyltransferase superfamily. RNA methyltransferase TrmH family.

Its subcellular location is the mitochondrion. It catalyses the reaction a guanosine in 21S rRNA + S-adenosyl-L-methionine = a 2'-O-methylguanosine in 21S rRNA + S-adenosyl-L-homocysteine + H(+). Its function is as follows. S-adenosyl-L-methionine-dependent 2'-O-ribose methyltransferase that catalyzes the formation of the 2'-O-methylguanosine corresponding to position 2270 in S.cerevisiae 21S mitochondrial large subunit ribosomal RNA (mtLSU rRNA), a universally conserved modification in the peptidyl transferase domain of the mtLSU rRNA. In Schizosaccharomyces pombe (strain 972 / ATCC 24843) (Fission yeast), this protein is rRNA methyltransferase 1, mitochondrial.